Here is a 632-residue protein sequence, read N- to C-terminus: Probable potassium transport system protein Kup (632 aa).

12 consecutive transmembrane segments (helical) span residues 17 to 37 (LFYLTLGSIGVVYGDIGTSPL), 60 to 80 (LISLMIWALTIIVTIKYVLFL), 106 to 126 (TAILMLLGLLGAALFLGDAMI), 146 to 166 (LSEYIVPISVVILALLFVVQS), 175 to 195 (FFGPITAVWFLVMAAAGISHI), 210 to 230 (AVSFLLHEGFYGVVVLGAVFL), 254 to 274 (WFLLVFPSLTLNYLGQGALVL), 292 to 312 (ALLPVVILATAATIIASQAVI), 344 to 364 (IFVPSVNAVLFIGVIFLVLSF), 370 to 390 (LATAYGISVTGAMVVTSIMAF), 401 to 421 (LPVAVIALAPLVILELIFLGA), and 426 to 446 (IHDGGYIPILIATAFTVIMWT).

The protein belongs to the HAK/KUP transporter (TC 2.A.72) family.

Its subcellular location is the cell inner membrane. It catalyses the reaction K(+)(in) + H(+)(in) = K(+)(out) + H(+)(out). Its function is as follows. Transport of potassium into the cell. Likely operates as a K(+):H(+) symporter. In Rhizobium rhizogenes (Agrobacterium rhizogenes), this protein is Probable potassium transport system protein Kup.